The following is a 150-amino-acid chain: Glycine cleavage system H-like protein gcvH2 (150 aa).

Residues 44 to 126 enclose the Lipoyl-binding domain; sequence VATVGLSSFG…PANNWMVKFK (83 aa).

The protein belongs to the GcvH family.

The chain is Glycine cleavage system H-like protein gcvH2 (gcvH2) from Dictyostelium discoideum (Social amoeba).